A 69-amino-acid chain; its full sequence is MAESRQTRLQVKCPTCQTAVVWEPENAFRPFCSQRCKLIDLGGWADGKYTVSGQTESLPEISEPDMAYR.

Zn(2+) is bound by residues C13, C16, C32, and C36.

It belongs to the DNA gyrase inhibitor YacG family. Interacts with GyrB. Requires Zn(2+) as cofactor.

Functionally, inhibits all the catalytic activities of DNA gyrase by preventing its interaction with DNA. Acts by binding directly to the C-terminal domain of GyrB, which probably disrupts DNA binding by the gyrase. The sequence is that of DNA gyrase inhibitor YacG from Neisseria meningitidis serogroup A / serotype 4A (strain DSM 15465 / Z2491).